The sequence spans 270 residues: Acyl-[acyl-carrier-protein]--UDP-N-acetylglucosamine O-acyltransferase (270 aa).

The protein belongs to the transferase hexapeptide repeat family. LpxA subfamily. As to quaternary structure, homotrimer.

Its subcellular location is the cytoplasm. It catalyses the reaction a (3R)-hydroxyacyl-[ACP] + UDP-N-acetyl-alpha-D-glucosamine = a UDP-3-O-[(3R)-3-hydroxyacyl]-N-acetyl-alpha-D-glucosamine + holo-[ACP]. It participates in glycolipid biosynthesis; lipid IV(A) biosynthesis; lipid IV(A) from (3R)-3-hydroxytetradecanoyl-[acyl-carrier-protein] and UDP-N-acetyl-alpha-D-glucosamine: step 1/6. Involved in the biosynthesis of lipid A, a phosphorylated glycolipid that anchors the lipopolysaccharide to the outer membrane of the cell. In Helicobacter pylori (strain G27), this protein is Acyl-[acyl-carrier-protein]--UDP-N-acetylglucosamine O-acyltransferase.